Here is a 472-residue protein sequence, read N- to C-terminus: MVVGDVTTGTELLVIGGGPGGYVAAIRGAQLGLDTTLVERDAYGGTCLNHGCIPSKALISASDVAHDARQAESMGVFADPAVDMAGMTEWKDGVVTRLTRGVESLCKNAGVNLVEGTAEFVDDGTVRVAHGGEGQGSESLSFEHAIVATGSRPMAVPGFEFDGEHILSSKDALALESVPEKLLVVGAGYIGMELSTVFAKLGAEVTVVEMLDDVLPGYEDDIATVVRDRAEELGIDFNFGEAADNWEETDEGIRVQTVDEDEVVTEYNAEKCLVAVGREPVTDTLALDNIDLQTDENGVIPTDDQCRTAFESVFAVGDVAGEPMLAHKAMAEGEVAARAAAGEPAAFDHQAIPAAVFTDPEIATVGMTESEAEAAGFEPVIGQMPVRANGRALTVNEKEGFVRVVADADEEFLLGAQIVGPEASELIAELGLGIEMGARLEDIAGTIHTHPTLSEAVHEAAAAARGEAVHTR.

FAD contacts are provided by residues 39-47 (ERDAYGGTC), lysine 56, and alanine 118. Cysteines 47 and 52 form a disulfide. Residues 186 to 190 (GAGYI), glutamate 209, and 275 to 278 (AVGR) contribute to the NAD(+) site. Residues aspartate 318 and alanine 326 each coordinate FAD. Histidine 450 acts as the Proton acceptor in catalysis.

This sequence belongs to the class-I pyridine nucleotide-disulfide oxidoreductase family. In terms of assembly, homodimer. Requires FAD as cofactor.

It localises to the cytoplasm. The catalysed reaction is N(6)-[(R)-dihydrolipoyl]-L-lysyl-[protein] + NAD(+) = N(6)-[(R)-lipoyl]-L-lysyl-[protein] + NADH + H(+). The sequence is that of Dihydrolipoyl dehydrogenase 2 (lpdA2) from Haloarcula marismortui (strain ATCC 43049 / DSM 3752 / JCM 8966 / VKM B-1809) (Halobacterium marismortui).